We begin with the raw amino-acid sequence, 581 residues long: Proline--tRNA ligase (581 aa).

It belongs to the class-II aminoacyl-tRNA synthetase family. ProS type 1 subfamily. Homodimer.

It is found in the cytoplasm. The enzyme catalyses tRNA(Pro) + L-proline + ATP = L-prolyl-tRNA(Pro) + AMP + diphosphate. Catalyzes the attachment of proline to tRNA(Pro) in a two-step reaction: proline is first activated by ATP to form Pro-AMP and then transferred to the acceptor end of tRNA(Pro). As ProRS can inadvertently accommodate and process non-cognate amino acids such as alanine and cysteine, to avoid such errors it has two additional distinct editing activities against alanine. One activity is designated as 'pretransfer' editing and involves the tRNA(Pro)-independent hydrolysis of activated Ala-AMP. The other activity is designated 'posttransfer' editing and involves deacylation of mischarged Ala-tRNA(Pro). The misacylated Cys-tRNA(Pro) is not edited by ProRS. The chain is Proline--tRNA ligase from Methylibium petroleiphilum (strain ATCC BAA-1232 / LMG 22953 / PM1).